The sequence spans 125 residues: Large ribosomal subunit protein bL12 (125 aa).

The protein belongs to the bacterial ribosomal protein bL12 family. Homodimer. Part of the ribosomal stalk of the 50S ribosomal subunit. Forms a multimeric L10(L12)X complex, where L10 forms an elongated spine to which 2 to 4 L12 dimers bind in a sequential fashion. Binds GTP-bound translation factors.

Forms part of the ribosomal stalk which helps the ribosome interact with GTP-bound translation factors. Is thus essential for accurate translation. This chain is Large ribosomal subunit protein bL12, found in Bradyrhizobium sp. (strain BTAi1 / ATCC BAA-1182).